A 297-amino-acid chain; its full sequence is Cyclin-dependent kinase 1 (297 aa).

N-acetylmethionine is present on Met-1. A Phosphotyrosine; by PKR modification is found at Tyr-4. The Protein kinase domain maps to 4 to 287; sequence YTKIEKIGEG…GKMALNHPYF (284 aa). N6-acetyllysine; alternate occurs at positions 6 and 9. Glycyl lysine isopeptide (Lys-Gly) (interchain with G-Cter in SUMO2); alternate cross-links involve residues Lys-6 and Lys-9. Position 10 to 18 (10 to 18) interacts with ATP; the sequence is IGEGTYGVV. Thr-14 bears the Phosphothreonine; by PKMYT1 mark. Phosphotyrosine; by PKMYT1, WEE1, WEE2 and PKC/PRKCD is present on Tyr-15. Tyr-19 bears the Phosphotyrosine mark. A Glycyl lysine isopeptide (Lys-Gly) (interchain with G-Cter in SUMO2) cross-link involves residue Lys-20. ATP is bound at residue Lys-33. Ser-39 carries the phosphoserine modification. Tyr-77 carries the phosphotyrosine modification. Asp-128 acts as the Proton acceptor in catalysis. Residue Lys-139 forms a Glycyl lysine isopeptide (Lys-Gly) (interchain with G-Cter in SUMO2) linkage. Position 141 is a phosphothreonine (Thr-141). Thr-161 is modified (phosphothreonine; by CAK). Ser-178 is subject to Phosphoserine. Thr-222 carries the post-translational modification Phosphothreonine. Position 245 is an N6-succinyllysine (Lys-245). Ser-248 is subject to Phosphoserine.

Belongs to the protein kinase superfamily. CMGC Ser/Thr protein kinase family. CDC2/CDKX subfamily. As to quaternary structure, forms a stable but non-covalent complex with a regulatory subunit and with a cyclin. The cyclin subunit imparts substrate specificity to the complex. Interacts with cyclins-B (CCNB1, CCNB2 and CCNB3) to form a serine/threonine kinase holoenzyme complex also known as maturation promoting factor (MPF). Promotes G2-M transition when in complex with a cyclin-B. Can also form CDK1-cylin-D and CDK1-cyclin-E complexes that phosphorylate RB1 in vitro. Associates with cyclins-A and B1 during S-phase in regenerating hepatocytes. Interacts with DLGAP5. Binds to the CDK inhibitors CDKN1A/p21 and CDKN1B/p27. Interacts with catalytically active CCNB1 and RALBP1 during mitosis to form an endocytotic complex during interphase. Interacts with FANCC. Interacts with CEP63; this interaction recruits CDK1 to centrosomes. Interacts with CENPA. Interacts with NR1D1. Interacts with proteasome subunit PSMA8; to participate in meiosis progression during spermatogenesis. Unable to complex with cyclin-B1 and also fails to bind to CDKN1A/p21. In terms of assembly, (Microbial infection) Interacts with severe fever with thrombocytopenia syndrome virus (SFTSV) NSs; this interaction is inclusion body dependent, it inhibits the formation and nuclear import of the cyclin B1-CDK1 complex and leads to cell cycle arrest. In terms of processing, phosphorylation at Thr-161 by CAK/CDK7 activates kinase activity. Phosphorylation at Thr-14 and Tyr-15 by PKMYT1 prevents nuclear translocation. Phosphorylation at Tyr-15 by WEE1 and WEE2 inhibits the protein kinase activity and acts as a negative regulator of entry into mitosis (G2 to M transition). Phosphorylation by PKMYT1 and WEE1 takes place during mitosis to keep CDK1-cyclin-B complexes inactive until the end of G2. By the end of G2, PKMYT1 and WEE1 are inactivated, but CDC25A and CDC25B are activated. Dephosphorylation by active CDC25A and CDC25B at Thr-14 and Tyr-15, leads to CDK1 activation at the G2-M transition. Phosphorylation at Tyr-15 by WEE2 during oogenesis is required to maintain meiotic arrest in oocytes during the germinal vesicle (GV) stage, a long period of quiescence at dictyate prophase I, leading to prevent meiotic reentry. Phosphorylation by WEE2 is also required for metaphase II exit during egg activation to ensure exit from meiosis in oocytes and promote pronuclear formation. Phosphorylated at Tyr-4 by PKR/EIF2AK2 upon genotoxic stress. This phosphorylation triggers CDK1 polyubiquitination and subsequent proteolysis, thus leading to G2 arrest. In response to UV irradiation, phosphorylation at Tyr-15 by PRKCD activates the G2/M DNA damage checkpoint. Polyubiquitinated upon genotoxic stress. In terms of tissue distribution, found in breast cancer tissues.

The protein localises to the nucleus. It is found in the cytoplasm. The protein resides in the mitochondrion. It localises to the cytoskeleton. Its subcellular location is the microtubule organizing center. The protein localises to the centrosome. It is found in the spindle. The catalysed reaction is L-seryl-[protein] + ATP = O-phospho-L-seryl-[protein] + ADP + H(+). It catalyses the reaction L-threonyl-[protein] + ATP = O-phospho-L-threonyl-[protein] + ADP + H(+). It carries out the reaction [DNA-directed RNA polymerase] + ATP = phospho-[DNA-directed RNA polymerase] + ADP + H(+). With respect to regulation, phosphorylation at Thr-14 or Tyr-15 inactivates the enzyme, while phosphorylation at Thr-161 activates it. Activated through a multistep process; binding to cyclin-B is required for relocation of cyclin-kinase complexes to the nucleus, activated by CAK/CDK7-mediated phosphorylation on Thr-161, and CDC25-mediated dephosphorylation of inhibitory phosphorylation on Thr-14 and Tyr-15. Activity is restricted during S-phase in an ATR-dependent manner to prevent premature entry into G2. Repressed by the CDK inhibitors CDKN1A/p21 and CDKN1B/p27 during the G1 phase and by CDKN1A/p21 at the G1-S checkpoint upon DNA damage. Transient activation by rapid and transient dephosphorylation at Tyr-15 triggered by TGFB1. Inhibited by flavopiridol and derivatives, pyrimidine derivatives, pyridine derivatives, purine derivatives, staurosporine, paullones, oxoindoles, indazole analogs, indolin-2-ones, pyrazolo[3,4-b]pyridines, imidazo[1,2-a]pyridine (AZ703), thiazolinone analogs(RO-3306), thiazol urea, macrocyclic quinoxalin-2-one, pyrrolo[2,3-a]carbazole, pyrazolo[1,5-a]-1,3,5-triazine, pyrazolo[1,5-a]pyrimidine (Dinaciclib, SCH 727965), 2-(1-ethyl-2-hydroxyethylamino)-6-benzylamino-9-isopropylpurine (roscovitine), olomoucine, AG-024322, AT-7519, P276-00, R547/Ro-4584820 and SNS-032/BMS-387032. Plays a key role in the control of the eukaryotic cell cycle by modulating the centrosome cycle as well as mitotic onset; promotes G2-M transition via association with multiple interphase cyclins. Phosphorylates PARVA/actopaxin, APC, AMPH, APC, BARD1, Bcl-xL/BCL2L1, BRCA2, CALD1, CASP8, CDC7, CDC20, CDC25A, CDC25C, CC2D1A, CENPA, CSNK2 proteins/CKII, FZR1/CDH1, CDK7, CEBPB, CHAMP1, DMD/dystrophin, EEF1 proteins/EF-1, EZH2, KIF11/EG5, EGFR, FANCG, FOS, GFAP, GOLGA2/GM130, GRASP1, UBE2A/hHR6A, HIST1H1 proteins/histone H1, HMGA1, HIVEP3/KRC, KAT5, LMNA, LMNB, LBR, MKI67, LATS1, MAP1B, MAP4, MARCKS, MCM2, MCM4, MKLP1, MLST8, MYB, NEFH, NFIC, NPC/nuclear pore complex, PITPNM1/NIR2, NPM1, NCL, NUCKS1, NPM1/numatrin, ORC1, PRKAR2A, EEF1E1/p18, EIF3F/p47, p53/TP53, NONO/p54NRB, PAPOLA, PLEC/plectin, RB1, TPPP, UL40/R2, RAB4A, RAP1GAP, RBBP8/CtIP, RCC1, RPS6KB1/S6K1, KHDRBS1/SAM68, ESPL1, SKI, BIRC5/survivin, STIP1, TEX14, beta-tubulins, MAPT/TAU, NEDD1, VIM/vimentin, TK1, FOXO1, RUNX1/AML1, SAMHD1, SIRT2, CGAS and RUNX2. CDK1/CDC2-cyclin-B controls pronuclear union in interphase fertilized eggs. Essential for early stages of embryonic development. During G2 and early mitosis, CDC25A/B/C-mediated dephosphorylation activates CDK1/cyclin complexes which phosphorylate several substrates that trigger at least centrosome separation, Golgi dynamics, nuclear envelope breakdown and chromosome condensation. Once chromosomes are condensed and aligned at the metaphase plate, CDK1 activity is switched off by WEE1- and PKMYT1-mediated phosphorylation to allow sister chromatid separation, chromosome decondensation, reformation of the nuclear envelope and cytokinesis. Phosphorylates KRT5 during prometaphase and metaphase. Inactivated by PKR/EIF2AK2- and WEE1-mediated phosphorylation upon DNA damage to stop cell cycle and genome replication at the G2 checkpoint thus facilitating DNA repair. Reactivated after successful DNA repair through WIP1-dependent signaling leading to CDC25A/B/C-mediated dephosphorylation and restoring cell cycle progression. Catalyzes lamin (LMNA, LMNB1 and LMNB2) phosphorylation at the onset of mitosis, promoting nuclear envelope breakdown. In proliferating cells, CDK1-mediated FOXO1 phosphorylation at the G2-M phase represses FOXO1 interaction with 14-3-3 proteins and thereby promotes FOXO1 nuclear accumulation and transcription factor activity, leading to cell death of postmitotic neurons. The phosphorylation of beta-tubulins regulates microtubule dynamics during mitosis. NEDD1 phosphorylation promotes PLK1-mediated NEDD1 phosphorylation and subsequent targeting of the gamma-tubulin ring complex (gTuRC) to the centrosome, an important step for spindle formation. In addition, CC2D1A phosphorylation regulates CC2D1A spindle pole localization and association with SCC1/RAD21 and centriole cohesion during mitosis. The phosphorylation of Bcl-xL/BCL2L1 after prolongated G2 arrest upon DNA damage triggers apoptosis. In contrast, CASP8 phosphorylation during mitosis prevents its activation by proteolysis and subsequent apoptosis. This phosphorylation occurs in cancer cell lines, as well as in primary breast tissues and lymphocytes. EZH2 phosphorylation promotes H3K27me3 maintenance and epigenetic gene silencing. CALD1 phosphorylation promotes Schwann cell migration during peripheral nerve regeneration. CDK1-cyclin-B complex phosphorylates NCKAP5L and mediates its dissociation from centrosomes during mitosis. Regulates the amplitude of the cyclic expression of the core clock gene BMAL1 by phosphorylating its transcriptional repressor NR1D1, and this phosphorylation is necessary for SCF(FBXW7)-mediated ubiquitination and proteasomal degradation of NR1D1. Phosphorylates EML3 at 'Thr-881' which is essential for its interaction with HAUS augmin-like complex and TUBG1. Phosphorylates CGAS during mitosis, leading to its inhibition, thereby preventing CGAS activation by self DNA during mitosis. Phosphorylates SKA3 on multiple sites during mitosis which promotes SKA3 binding to the NDC80 complex and anchoring of the SKA complex to kinetochores, to enable stable attachment of mitotic spindle microtubules to kinetochores. Functionally, (Microbial infection) Acts as a receptor for hepatitis C virus (HCV) in hepatocytes and facilitates its cell entry. This is Cyclin-dependent kinase 1 (CDK1) from Homo sapiens (Human).